A 631-amino-acid chain; its full sequence is Dolichyl-diphosphooligosaccharide--protein glycosyltransferase subunit 2 (631 aa).

The signal sequence occupies residues 1-22 (MAPPGSSAVFLLALTITASTQA). At 23 to 540 (LTPTHYLTKH…REPEKRPPTV (518 aa)) the chain is on the lumenal side. Asparagine 106 carries N-linked (GlcNAc...) asparagine glycosylation. A Glycyl lysine isopeptide (Lys-Gly) (interchain with G-Cter in ubiquitin) cross-link involves residue lysine 154. Residues 541 to 561 (VSNTFTALILSPLLLLFALWI) form a helical membrane-spanning segment. At 562–571 (RIGANVSNFT) the chain is on the cytoplasmic side. Residues 572-592 (FAPSTVIFHLGHAAMLGLMYV) traverse the membrane as a helical segment. Over 593–596 (YWTQ) the chain is Lumenal. The helical transmembrane segment at 597–617 (LNMFQTLKYLAVLGTVTFLAG) threads the bilayer. Over 618–631 (NRMLAQQAVKRTAH) the chain is Cytoplasmic.

This sequence belongs to the SWP1 family. As to quaternary structure, component of the oligosaccharyltransferase (OST) complex. OST exists in two different complex forms which contain common core subunits RPN1, RPN2, OST48, OST4, DAD1 and TMEM258, either STT3A or STT3B as catalytic subunits, and form-specific accessory subunits. STT3A complex assembly occurs through the formation of 3 subcomplexes. Subcomplex 1 contains RPN1 and TMEM258, subcomplex 2 contains the STT3A-specific subunits STT3A, DC2/OSTC, and KCP2 as well as the core subunit OST4, and subcomplex 3 contains RPN2, DAD1, and OST48. The STT3A complex can form stable complexes with the Sec61 complex or with both the Sec61 and TRAP complexes. Interacts with DDI2. Interacts with TMEM35A/NACHO.

The protein resides in the endoplasmic reticulum. It localises to the endoplasmic reticulum membrane. The protein operates within protein modification; protein glycosylation. Functionally, subunit of the oligosaccharyl transferase (OST) complex that catalyzes the initial transfer of a defined glycan (Glc(3)Man(9)GlcNAc(2) in eukaryotes) from the lipid carrier dolichol-pyrophosphate to an asparagine residue within an Asn-X-Ser/Thr consensus motif in nascent polypeptide chains, the first step in protein N-glycosylation. N-glycosylation occurs cotranslationally and the complex associates with the Sec61 complex at the channel-forming translocon complex that mediates protein translocation across the endoplasmic reticulum (ER). All subunits are required for a maximal enzyme activity. This chain is Dolichyl-diphosphooligosaccharide--protein glycosyltransferase subunit 2, found in Rattus norvegicus (Rat).